A 617-amino-acid chain; its full sequence is Dihydroxy-acid dehydratase (617 aa).

Aspartate 81 lines the Mg(2+) pocket. A [2Fe-2S] cluster-binding site is contributed by cysteine 122. Residues aspartate 123 and lysine 124 each contribute to the Mg(2+) site. Position 124 is an N6-carboxylysine (lysine 124). Cysteine 195 is a binding site for [2Fe-2S] cluster. Glutamate 491 serves as a coordination point for Mg(2+). The active-site Proton acceptor is serine 517.

The protein belongs to the IlvD/Edd family. In terms of assembly, homodimer. Requires [2Fe-2S] cluster as cofactor. Mg(2+) is required as a cofactor.

The enzyme catalyses (2R)-2,3-dihydroxy-3-methylbutanoate = 3-methyl-2-oxobutanoate + H2O. It catalyses the reaction (2R,3R)-2,3-dihydroxy-3-methylpentanoate = (S)-3-methyl-2-oxopentanoate + H2O. The protein operates within amino-acid biosynthesis; L-isoleucine biosynthesis; L-isoleucine from 2-oxobutanoate: step 3/4. It participates in amino-acid biosynthesis; L-valine biosynthesis; L-valine from pyruvate: step 3/4. Its function is as follows. Functions in the biosynthesis of branched-chain amino acids. Catalyzes the dehydration of (2R,3R)-2,3-dihydroxy-3-methylpentanoate (2,3-dihydroxy-3-methylvalerate) into 2-oxo-3-methylpentanoate (2-oxo-3-methylvalerate) and of (2R)-2,3-dihydroxy-3-methylbutanoate (2,3-dihydroxyisovalerate) into 2-oxo-3-methylbutanoate (2-oxoisovalerate), the penultimate precursor to L-isoleucine and L-valine, respectively. The sequence is that of Dihydroxy-acid dehydratase from Buchnera aphidicola subsp. Acyrthosiphon pisum (strain 5A).